The primary structure comprises 106 residues: UPF0145 protein VV2_1464 (106 aa).

It belongs to the UPF0145 family.

The chain is UPF0145 protein VV2_1464 from Vibrio vulnificus (strain CMCP6).